The chain runs to 133 residues: Small ribosomal subunit protein uS9 (133 aa).

Belongs to the universal ribosomal protein uS9 family.

The sequence is that of Small ribosomal subunit protein uS9 from Ureaplasma urealyticum serovar 10 (strain ATCC 33699 / Western).